A 1397-amino-acid polypeptide reads, in one-letter code: DNA-directed RNA polymerase subunit beta' (1397 aa).

Zn(2+)-binding residues include cysteine 75, cysteine 77, cysteine 90, and cysteine 93. 3 residues coordinate Mg(2+): aspartate 465, aspartate 467, and aspartate 469. Zn(2+) is bound by residues cysteine 819, cysteine 893, cysteine 900, and cysteine 903.

This sequence belongs to the RNA polymerase beta' chain family. In terms of assembly, the RNAP catalytic core consists of 2 alpha, 1 beta, 1 beta' and 1 omega subunit. When a sigma factor is associated with the core the holoenzyme is formed, which can initiate transcription. It depends on Mg(2+) as a cofactor. The cofactor is Zn(2+).

The enzyme catalyses RNA(n) + a ribonucleoside 5'-triphosphate = RNA(n+1) + diphosphate. DNA-dependent RNA polymerase catalyzes the transcription of DNA into RNA using the four ribonucleoside triphosphates as substrates. The sequence is that of DNA-directed RNA polymerase subunit beta' from Acinetobacter baumannii (strain SDF).